Here is a 124-residue protein sequence, read N- to C-terminus: S-adenosylmethionine decarboxylase proenzyme (124 aa).

Serine 63 serves as the catalytic Schiff-base intermediate with substrate; via pyruvic acid. The residue at position 63 (serine 63) is a Pyruvic acid (Ser); by autocatalysis. Histidine 68 acts as the Proton acceptor; for processing activity in catalysis. The Proton donor; for catalytic activity role is filled by cysteine 83.

This sequence belongs to the prokaryotic AdoMetDC family. Type 1 subfamily. As to quaternary structure, heterotetramer of two alpha and two beta chains arranged as a dimer of alpha/beta heterodimers. It depends on pyruvate as a cofactor. Post-translationally, is synthesized initially as an inactive proenzyme. Formation of the active enzyme involves a self-maturation process in which the active site pyruvoyl group is generated from an internal serine residue via an autocatalytic post-translational modification. Two non-identical subunits are generated from the proenzyme in this reaction, and the pyruvate is formed at the N-terminus of the alpha chain, which is derived from the carboxyl end of the proenzyme. The post-translation cleavage follows an unusual pathway, termed non-hydrolytic serinolysis, in which the side chain hydroxyl group of the serine supplies its oxygen atom to form the C-terminus of the beta chain, while the remainder of the serine residue undergoes an oxidative deamination to produce ammonia and the pyruvoyl group blocking the N-terminus of the alpha chain.

The catalysed reaction is S-adenosyl-L-methionine + H(+) = S-adenosyl 3-(methylsulfanyl)propylamine + CO2. The protein operates within amine and polyamine biosynthesis; S-adenosylmethioninamine biosynthesis; S-adenosylmethioninamine from S-adenosyl-L-methionine: step 1/1. Its function is as follows. Catalyzes the decarboxylation of S-adenosylmethionine to S-adenosylmethioninamine (dcAdoMet), the propylamine donor required for the synthesis of the polyamines spermine and spermidine from the diamine putrescine. The polypeptide is S-adenosylmethionine decarboxylase proenzyme (Thermoanaerobacter pseudethanolicus (strain ATCC 33223 / 39E) (Clostridium thermohydrosulfuricum)).